The primary structure comprises 225 residues: UPF0758 protein Vapar_4033 (225 aa).

The 123-residue stretch at 103–225 folds into the MPN domain; that stretch reads VFDSPGTVKQ…SYSMAEKGLL (123 aa). Zn(2+) is bound by residues His174, His176, and Asp187. The JAMM motif motif lies at 174–187; sequence HNHPSGSIEPSRAD.

It belongs to the UPF0758 family.

The polypeptide is UPF0758 protein Vapar_4033 (Variovorax paradoxus (strain S110)).